The primary structure comprises 212 residues: Thymidylate kinase (212 aa).

An ATP-binding site is contributed by 10–17; that stretch reads GLEGAGKT.

It belongs to the thymidylate kinase family.

It catalyses the reaction dTMP + ATP = dTDP + ADP. Functionally, phosphorylation of dTMP to form dTDP in both de novo and salvage pathways of dTTP synthesis. The protein is Thymidylate kinase of Yersinia pseudotuberculosis serotype O:3 (strain YPIII).